The following is a 249-amino-acid chain: tRNA pseudouridine synthase A (249 aa).

The Nucleophile role is filled by Asp-53. Tyr-111 contributes to the substrate binding site.

It belongs to the tRNA pseudouridine synthase TruA family. As to quaternary structure, homodimer.

The enzyme catalyses uridine(38/39/40) in tRNA = pseudouridine(38/39/40) in tRNA. Functionally, formation of pseudouridine at positions 38, 39 and 40 in the anticodon stem and loop of transfer RNAs. This is tRNA pseudouridine synthase A from Streptococcus gordonii (strain Challis / ATCC 35105 / BCRC 15272 / CH1 / DL1 / V288).